Consider the following 156-residue polypeptide: Small ribosomal subunit protein uS7 (156 aa).

Belongs to the universal ribosomal protein uS7 family. Part of the 30S ribosomal subunit. Contacts proteins S9 and S11.

Its function is as follows. One of the primary rRNA binding proteins, it binds directly to 16S rRNA where it nucleates assembly of the head domain of the 30S subunit. Is located at the subunit interface close to the decoding center, probably blocks exit of the E-site tRNA. This Bartonella quintana (strain Toulouse) (Rochalimaea quintana) protein is Small ribosomal subunit protein uS7.